The chain runs to 115 residues: MKFVLLFGVLLVTLFSHSSAEMLDDFDQADEDELLSLIEKEEARAEECTPRFYDCSHDRHSCCRSELFKDVCTCFYPEGGDNEVCTCQQPKHLKYMEKAADKAKKFGGKIKKWFG.

Residues 1–20 (MKFVLLFGVLLVTLFSHSSA) form the signal peptide. The propeptide occupies 21–44 (EMLDDFDQADEDELLSLIEKEEAR). Cystine bridges form between cysteine 48-cysteine 63, cysteine 55-cysteine 72, cysteine 62-cysteine 87, and cysteine 74-cysteine 85.

The protein belongs to the neurotoxin 19 (CSTX) family. 01 subfamily. Expressed by the venom gland.

It localises to the secreted. The protein is U3-lycotoxin-Ls1v of Lycosa singoriensis (Wolf spider).